The chain runs to 474 residues: C6 finger domain transcription factor aclZ (474 aa).

The segment at residues cysteine 42–cysteine 69 is a DNA-binding region (zn(2)-C6 fungal-type). 2 disordered regions span residues arginine 85–alanine 148 and methionine 177–threonine 206. The segment covering valine 90 to threonine 105 has biased composition (polar residues). Over residues threonine 117–histidine 138 the composition is skewed to basic and acidic residues.

It is found in the nucleus. Functionally, transcription factor that specifically regulates the gene cluster that mediates the biosynthesis of aspirochlorine (or antibiotic A30641), an unusual halogenated spiro compound with distinctive antifungal properties due to selective inhibition of protein biosynthesis, and which is also active against bacteria, viruses, and murine tumor cells. The chain is C6 finger domain transcription factor aclZ from Aspergillus oryzae (strain ATCC 42149 / RIB 40) (Yellow koji mold).